We begin with the raw amino-acid sequence, 172 residues long: Nucleoside-triphosphatase THEP1 (172 aa).

ATP-binding positions include 11–18 (GKPGIGKT) and 101–108 (IILIDEIG).

This sequence belongs to the THEP1 NTPase family.

The enzyme catalyses a ribonucleoside 5'-triphosphate + H2O = a ribonucleoside 5'-diphosphate + phosphate + H(+). Functionally, has nucleotide phosphatase activity towards ATP, GTP, CTP, TTP and UTP. May hydrolyze nucleoside diphosphates with lower efficiency. This is Nucleoside-triphosphatase THEP1 from Sulfolobus acidocaldarius (strain ATCC 33909 / DSM 639 / JCM 8929 / NBRC 15157 / NCIMB 11770).